We begin with the raw amino-acid sequence, 431 residues long: Magnetosome protein MamH (431 aa).

Helical transmembrane passes span 21–41 (LLSA…PLFL), 57–77 (ANVQ…LGYL), 86–106 (IIVA…LSPW), 107–127 (IGGA…IMSA), 156–176 (TAFM…QIPA), 178–198 (AGIA…AWLA), 243–263 (MVFV…LIKV), 274–294 (ILIG…RSFI), 302–321 (AVLL…GFII), 358–378 (LLGS…IFFV), and 380–400 (VGGF…TGVG).

The protein belongs to the major facilitator superfamily.

The protein localises to the magnetosome membrane. Functionally, required for correct biomineralization of the magnetosome; probably transports some form of iron. Partially functionally redundant with MamZ. The sequence is that of Magnetosome protein MamH (mamH) from Paramagnetospirillum magneticum (strain ATCC 700264 / AMB-1) (Magnetospirillum magneticum).